The sequence spans 124 residues: Large ribosomal subunit protein bL12 (124 aa).

Belongs to the bacterial ribosomal protein bL12 family. Homodimer. Part of the ribosomal stalk of the 50S ribosomal subunit. Forms a multimeric L10(L12)X complex, where L10 forms an elongated spine to which 2 to 4 L12 dimers bind in a sequential fashion. Binds GTP-bound translation factors.

Its function is as follows. Forms part of the ribosomal stalk which helps the ribosome interact with GTP-bound translation factors. Is thus essential for accurate translation. The protein is Large ribosomal subunit protein bL12 of Phocaeicola vulgatus (strain ATCC 8482 / DSM 1447 / JCM 5826 / CCUG 4940 / NBRC 14291 / NCTC 11154) (Bacteroides vulgatus).